The sequence spans 579 residues: MTKKLTAQEKLNRKPIPTACVFCHEKHLQCDLGRPCQNCSKRGIGDTCRDKERKPRKRGPRKVKKEREVSASTKSEISNTINQQLIPVINTATAVSNRQNSSKIIKAKQTGVSTKKTRISKLAMDSLPLQMPVINSPSDMFGKQKKVMSPELPKIPSLTQLFNPTAEPIISDALLPSNQNSAANLPSLADKTPLEEFKNKPLSERAPQQGPQQPAQQLLPIPEKLNSDHTSSNSSTGEFGSVWTTEEYTKLNDMLSTPNLSRNNSKTYLNSNIAWSPSNMMKMDPITESQRPINTQELLNLTSNGLKRTHSRPHISLDQMASESKRHSANDTSPESQGGETVENLSPYRFRLLVKTPEDLYKHQALIQPHNYKSAYLELLRFLRWRFINSDKPSSGKSQRDGPEQLQNIAHSIKTHYAPIFVTLTNSLIAQDLKLQEIILQRALLEYESMAKLVNCTPMCIWRRSGEICFASNEFISLTGFNKKEILNKRKFIMEFMDNESIVDYYDIFHEYLAFGSTQSGPFNSSTGTSDGQAIFSECNLLLKNGCYLRCACIWTVKRDAFNIPMLIMGQFLPIFDIE.

The segment at residues 20-48 (CVFCHEKHLQCDLGRPCQNCSKRGIGDTC) is a DNA-binding region (zn(2)-C6 fungal-type). Basic and acidic residues predominate over residues 43–53 (GIGDTCRDKER). 2 disordered regions span residues 43 to 75 (GIGDTCRDKERKPRKRGPRKVKKEREVSASTKS) and 319 to 342 (QMASESKRHSANDTSPESQGGETV). Residues 54–64 (KPRKRGPRKVK) show a composition bias toward basic residues. Positions 330-339 (NDTSPESQGG) are enriched in polar residues. Positions 444–516 (LLEYESMAKL…DIFHEYLAFG (73 aa)) constitute a PAS domain.

It belongs to the ERT1/acuK family.

The protein resides in the nucleus. Functionally, transcription factor which regulates nonfermentable carbon utilization. This is Glucose starvation modulator protein 1 (GSM1) from Kluyveromyces lactis (strain ATCC 8585 / CBS 2359 / DSM 70799 / NBRC 1267 / NRRL Y-1140 / WM37) (Yeast).